A 386-amino-acid polypeptide reads, in one-letter code: Copper-containing nitrite reductase (386 aa).

The signal sequence occupies residues 1–18 (MKRQALAAIIASMFALAA). Residue Cys-19 is the site of N-palmitoyl cysteine attachment. Cys-19 is lipidated: S-diacylglycerol cysteine. Plastocyanin-like domains follow at residues 97 to 191 (WTFD…ILVE) and 241 to 342 (GHVG…LKVE). Cu cation contacts are provided by His-130, His-135, His-170, Cys-171, His-179, and Met-184. His-135 contributes to the substrate binding site. His-276 lines the substrate pocket. Residue His-325 coordinates Cu cation. Residues 363–386 (GAAPAASAPAASAPAASAPAKSDY) form a disordered region. Residues 364–386 (AAPAASAPAASAPAASAPAKSDY) show a composition bias toward low complexity. 3 tandem repeats follow at residues 367-371 (AASAP), 372-376 (AASAP), and 377-381 (AASAP). The interval 367-381 (AASAPAASAPAASAP) is 3 X 5 AA tandem repeats of A-A-S-A-P.

Belongs to the multicopper oxidase family. Homotrimer. The cofactor is Cu(+). It depends on Cu(2+) as a cofactor.

Its subcellular location is the cell outer membrane. It carries out the reaction nitric oxide + Fe(III)-[cytochrome c] + H2O = Fe(II)-[cytochrome c] + nitrite + 2 H(+). Catalyzes the reduction of nitrite to nitric oxide (NO). It could be essential for growth and survival in oxygen-depleted environments. This Neisseria meningitidis serogroup A / serotype 4A (strain DSM 15465 / Z2491) protein is Copper-containing nitrite reductase (aniA).